Consider the following 590-residue polypeptide: Myo-inositol transporter 3A (590 aa).

Topologically, residues 1-57 are cytoplasmic; that stretch reads MSATHIENRDDSFLENKGIDHIGRPENNNGSQEPPSPSGFGGHLIDENLVRVEGEDK. Residues 15-24 show a composition bias toward basic and acidic residues; it reads ENKGIDHIGR. The tract at residues 15-40 is disordered; it reads ENKGIDHIGRPENNNGSQEPPSPSGF. Residues 58-78 traverse the membrane as a helical segment; sequence VTWYLCFLISASAIAGFLFGY. The Extracellular segment spans residues 79–105; that stretch reads DTGVVGVALPLVGTDLGGSALNSSQQE. N-linked (GlcNAc...) asparagine glycosylation occurs at N100. The helical transmembrane segment at 106-126 threads the bilayer; that stretch reads IITAGTTIGAIFGSAILGGWG. The Cytoplasmic portion of the chain corresponds to 127 to 132; sequence DRLGRK. The helical transmembrane segment at 133 to 153 threads the bilayer; sequence GAILVSDVFFTIGAVIIASSY. The Extracellular segment spans residues 154–157; it reads SVPQ. Residues 158–178 traverse the membrane as a helical segment; that stretch reads IIVGRIILGIGVGGAAVIAPL. Over 179-192 the chain is Cytoplasmic; that stretch reads FITETAPTAVRGRC. A helical membrane pass occupies residues 193–213; it reads IGVNAFFIPFGQVVSDAIGAG. Residues 214–222 lie on the Extracellular side of the membrane; it reads VQNMHNGWR. The helical transmembrane segment at 223 to 243 threads the bilayer; the sequence is LLFALGAVPSLLQLLLFHYLP. Topologically, residues 244–325 are cytoplasmic; sequence ESPRILILKG…AVSALQAAGQ (82 aa). The helical transmembrane segment at 326 to 346 threads the bilayer; the sequence is LTGFNTLLYYAGTLFGLLGLS. The Extracellular portion of the chain corresponds to 347–349; it reads NPA. A helical membrane pass occupies residues 350–370; that stretch reads LGGLIPAGTNAVFVLIGMSLV. Over 371 to 376 the chain is Cytoplasmic; it reads DKVGRR. The chain crosses the membrane as a helical span at residues 377 to 397; sequence GLLLIGVPIMLLGHVWNIVSF. Over 398–420 the chain is Extracellular; the sequence is YYMCKPTGGFLDTSYSYDTTDVG. A helical transmembrane segment spans residues 421–441; sequence IVIGGIVFFVVGYGLTYSHLV. Residues 442–455 are Cytoplasmic-facing; the sequence is WYQAEYLTLEVRSM. A helical membrane pass occupies residues 456 to 476; that stretch reads GSGIATTVCWIANLVVSVSYL. At 477 to 485 the chain is on the extracellular side; that stretch reads SELETMTPS. A helical membrane pass occupies residues 486 to 506; the sequence is GTYGFYFGISVIGFVFLVFCL. Over 507–590 the chain is Cytoplasmic; it reads PETKQLSIDE…GGKRTPSASV (84 aa).

The protein belongs to the major facilitator superfamily. Sugar transporter (TC 2.A.1.1) family.

The protein localises to the cell membrane. It catalyses the reaction myo-inositol(out) + H(+)(out) = myo-inositol(in) + H(+)(in). Its function is as follows. Transporter for myo-inositol. The sequence is that of Myo-inositol transporter 3A (ITR3A) from Cryptococcus neoformans var. grubii serotype A (strain H99 / ATCC 208821 / CBS 10515 / FGSC 9487) (Filobasidiella neoformans var. grubii).